Here is a 1020-residue protein sequence, read N- to C-terminus: C protein alpha-antigen (1020 aa).

The signal sequence occupies residues 1–41 (MFRRSKNNSYDTSQTKQRFSIKKFKFGAASVLIGLSFLGGV). Positions 227–964 (VPDKDKYDPT…EVTVHVTPKP (738 aa)) are 9 X 82 AA tandem repeats. Disordered stretches follow at residues 261–281 (DGSKGVPTVVGDRPDTNVPGD), 306–330 (PKPVPDKDKYDPTGGETTVPQGTPV), 342–363 (PDGSKGVPTVVGDRPDTNVPGD), 388–445 (PKPV…VPGD), 470–494 (PKPVPDKDKYDPTGGETTVPQGTPV), 506–527 (PDGSKGVPTVVGDRPDTNVPGD), 552–576 (PKPVPDKDKYDPTGGETTVPQGTPV), 588–610 (PDGSKGVPTVVGDRPDTNVPGDH), 634–658 (PKPVPDKDKYDPTGGETTVPQGTPV), 670–692 (PDGSKGVPTVVGDRPDTNVPGDH), 716–740 (PKPVPDKDKYDPTGGETTVPQGTPV), 752–774 (PDGSKGVPTVVGDRPDTNVPGDH), 798–822 (PKPVPDKDKYDPTGGETTVPQGTPV), 834–856 (PDGSKGVPTVVGDRPDTNVPGDH), 880–904 (PKPVPDKDKYDPTGGETTVPQGTPV), and 962–989 (PKPVPDKDKYDPTGKAQQVNGKGNKLPA). The span at 272–281 (DRPDTNVPGD) shows a compositional bias: basic and acidic residues. Polar residues predominate over residues 320-329 (GETTVPQGTP). The segment covering 354–363 (DRPDTNVPGD) has biased composition (basic and acidic residues). The span at 402–411 (GETTVPQGTP) shows a compositional bias: polar residues. The span at 436 to 445 (DRPDTNVPGD) shows a compositional bias: basic and acidic residues. A compositionally biased stretch (polar residues) spans 484–493 (GETTVPQGTP). The segment covering 518 to 527 (DRPDTNVPGD) has biased composition (basic and acidic residues). Residues 566 to 575 (GETTVPQGTP) are compositionally biased toward polar residues. Residues 600–610 (DRPDTNVPGDH) are compositionally biased toward basic and acidic residues. Polar residues predominate over residues 648-657 (GETTVPQGTP). Positions 682-692 (DRPDTNVPGDH) are enriched in basic and acidic residues. Polar residues predominate over residues 730–739 (GETTVPQGTP). Residues 764–774 (DRPDTNVPGDH) are compositionally biased toward basic and acidic residues. The segment covering 812-821 (GETTVPQGTP) has biased composition (polar residues). The segment covering 846–856 (DRPDTNVPGDH) has biased composition (basic and acidic residues). Over residues 894–903 (GETTVPQGTP) the composition is skewed to polar residues. The short motif at 987–991 (LPATG) is the LPXTG sorting signal element. At threonine 990 the chain carries Pentaglycyl murein peptidoglycan amidated threonine. Residues 991 to 1020 (GENATPFFNVAALTIISSVGLLSVSKKKED) constitute a propeptide, removed by sortase.

The protein localises to the secreted. Its subcellular location is the cell wall. Functionally, may play a role in both virulence and immunity. This Streptococcus agalactiae serotype Ia (strain ATCC 27591 / A909 / CDC SS700) protein is C protein alpha-antigen (bca).